A 551-amino-acid polypeptide reads, in one-letter code: Protein PLASTID TRANSCRIPTIONALLY ACTIVE 12, chloroplastic (551 aa).

A chloroplast-targeting transit peptide spans 1 to 47; sequence MASCSRTWLLPGMAPQATAQTVPRPLQSLKVFAGLPHRRRVLFSGVS. Disordered stretches follow at residues 76-161 and 463-529; these read SSYF…EGES and HSYN…DQLS. Over residues 109–119 the composition is skewed to low complexity; sequence RVRAARAPAPV. 2 stretches are compositionally biased toward acidic residues: residues 467-476 and 485-498; these read EDSDDDEEDA and SLED…DAED. Residues 505-516 show a composition bias toward polar residues; the sequence is RNWSVLKTTGQA. Basic and acidic residues predominate over residues 518 to 529; that stretch reads NPKEKSKKDQLS.

In terms of assembly, component of the plastid-encoded plastid RNA polymerase (PEP) complex.

The protein resides in the plastid. The protein localises to the chloroplast. Functionally, required for the activity of the plastid-encoded RNA polymerase (PEP) and full expression of genes transcribed by PEP. Required for the proper build-up and formation of the PEP-complex. Binds single-stranded (ss) DNA and RNA, but not double-stranded (ds) DNA. In Oryza sativa subsp. japonica (Rice), this protein is Protein PLASTID TRANSCRIPTIONALLY ACTIVE 12, chloroplastic.